A 258-amino-acid chain; its full sequence is Regulatory protein RecX (258 aa).

This sequence belongs to the RecX family.

The protein resides in the cytoplasm. Functionally, modulates RecA activity. This chain is Regulatory protein RecX, found in Streptococcus gordonii (strain Challis / ATCC 35105 / BCRC 15272 / CH1 / DL1 / V288).